The sequence spans 1081 residues: Histone demethylase-like protein A (1081 aa).

The interval 37–173 is disordered; sequence QHLQHPSLPN…LSGNTDYARY (137 aa). A compositionally biased stretch (low complexity) spans 66 to 81; sequence SPSCNESNESNGETSS. Polar residues predominate over residues 119-132; it reads DTSNILSGSATSVS. Residues 141–161 are compositionally biased toward low complexity; sequence NSTPPSTVNNVPSSSSITSDS. In terms of domain architecture, SWIRM spans 192–287; the sequence is CVTAAYACRL…FGCVEIPPAL (96 aa). Residues 902–940 form a disordered region; that stretch reads ATAQKKKEPPCSNGFSAPVSTSAHPTDASAPARSNNSFS. Residues 914–925 are compositionally biased toward polar residues; it reads NGFSAPVSTSAH. Residues 969–1049 constitute a DNA-binding region (HMG box); it reads ARTGLNPFLL…TNTEIWDRWK (81 aa).

It belongs to the flavin monoamine oxidase family.

The protein resides in the nucleus. Its function is as follows. H3K4 demethylase-like protein. Might not act as a H3K4 demethylase or is not the major H3K4 demethylase since its deletion does not affect whole genome H3K4 methylation. The protein is Histone demethylase-like protein A of Aspergillus fumigatus (strain ATCC MYA-4609 / CBS 101355 / FGSC A1100 / Af293) (Neosartorya fumigata).